The primary structure comprises 470 residues: Argininosuccinate lyase (470 aa).

It belongs to the lyase 1 family. Argininosuccinate lyase subfamily.

It is found in the cytoplasm. The catalysed reaction is 2-(N(omega)-L-arginino)succinate = fumarate + L-arginine. Its pathway is amino-acid biosynthesis; L-arginine biosynthesis; L-arginine from L-ornithine and carbamoyl phosphate: step 3/3. This Mycobacterium tuberculosis (strain CDC 1551 / Oshkosh) protein is Argininosuccinate lyase.